A 548-amino-acid polypeptide reads, in one-letter code: Glucose-6-phosphate isomerase (548 aa).

The active-site Proton donor is Glu359. Residues His390 and Lys510 contribute to the active site.

The protein belongs to the GPI family.

It localises to the cytoplasm. The enzyme catalyses alpha-D-glucose 6-phosphate = beta-D-fructose 6-phosphate. Its pathway is carbohydrate biosynthesis; gluconeogenesis. It functions in the pathway carbohydrate degradation; glycolysis; D-glyceraldehyde 3-phosphate and glycerone phosphate from D-glucose: step 2/4. In terms of biological role, catalyzes the reversible isomerization of glucose-6-phosphate to fructose-6-phosphate. In Gloeobacter violaceus (strain ATCC 29082 / PCC 7421), this protein is Glucose-6-phosphate isomerase.